The primary structure comprises 404 residues: Cysteine desulfurase IscS (404 aa).

Pyridoxal 5'-phosphate is bound by residues 75–76 (AT), N155, Q183, and 203–205 (SAH). At K206 the chain carries N6-(pyridoxal phosphate)lysine. Pyridoxal 5'-phosphate is bound at residue T243. The active-site Cysteine persulfide intermediate is the C328. C328 is a [2Fe-2S] cluster binding site.

Belongs to the class-V pyridoxal-phosphate-dependent aminotransferase family. NifS/IscS subfamily. Homodimer. Forms a heterotetramer with IscU, interacts with other sulfur acceptors. Requires pyridoxal 5'-phosphate as cofactor.

The protein localises to the cytoplasm. The catalysed reaction is (sulfur carrier)-H + L-cysteine = (sulfur carrier)-SH + L-alanine. Its pathway is cofactor biosynthesis; iron-sulfur cluster biosynthesis. In terms of biological role, master enzyme that delivers sulfur to a number of partners involved in Fe-S cluster assembly, tRNA modification or cofactor biosynthesis. Catalyzes the removal of elemental sulfur atoms from cysteine to produce alanine. Functions as a sulfur delivery protein for Fe-S cluster synthesis onto IscU, an Fe-S scaffold assembly protein, as well as other S acceptor proteins. This chain is Cysteine desulfurase IscS, found in Photorhabdus laumondii subsp. laumondii (strain DSM 15139 / CIP 105565 / TT01) (Photorhabdus luminescens subsp. laumondii).